A 402-amino-acid chain; its full sequence is MQTLHQSQLLQNPAEAANNQSESDAPPKQVAQAMERLNQAARVIADIRLGADRILEAMFVASQPRHTDMPLQLFLREDASMRQHLQDLRLIGKKLEESGVLTESLRSRSNSWGLHMPLVCPDGAVVAYAWKRQLAGQAGASAVDRTRLALKAFTDQKRRFFPHIDDGLKMEPSSKKHRASHLLLENGREEPVDYKTLPDIQSRLEKLVPSVKVSTYGRLNWLKRANSLPGSGSDDPTEASKPIFQSSSKLRSGLQTEVVDKIAVIELSFPSLFRAIVSLSPAGSVDPDAVAFFSPDEGGSYLHARGFSVYHVYKHITEHAATALQYFLGFGTGTALYSLLLWICSFESVFSKPCTKCGRLLAMDKKSALILPPLHRAYQELPLALNLDVCEAYHSSCSQDDT.

A compositionally biased stretch (polar residues) spans Met1–Ser23. A disordered region spans residues Met1 to Val30. Residues Lys28–Leu49 adopt a coiled-coil conformation.

The protein belongs to the Mediator complex subunit 27 family. As to quaternary structure, component of the Mediator complex.

The protein resides in the nucleus. In terms of biological role, component of the Mediator complex, a coactivator involved in the regulated transcription of nearly all RNA polymerase II-dependent genes. Mediator functions as a bridge to convey information from gene-specific regulatory proteins to the basal RNA polymerase II transcription machinery. The Mediator complex, having a compact conformation in its free form, is recruited to promoters by direct interactions with regulatory proteins and serves for the assembly of a functional preinitiation complex with RNA polymerase II and the general transcription factors. The chain is Mediator of RNA polymerase II transcription subunit 27 (MED27) from Arabidopsis thaliana (Mouse-ear cress).